Here is a 292-residue protein sequence, read N- to C-terminus: Fat storage-inducing transmembrane protein 1 (292 aa).

Residues 1 to 18 (MERGPTVGAGLGAGTRVR) lie on the Lumenal side of the membrane. The chain crosses the membrane as a helical span at residues 19–39 (ALLGCLVKVLLWVASALLYFG). The Cytoplasmic portion of the chain corresponds to 40–54 (SEQAARLLGSPCLRR). The chain crosses the membrane as a helical span at residues 55-75 (LYHAWLAAVVIFGPLLQFHVN). Residues 76–94 (SRTIFASHGNFFNIKFVNS) are Lumenal-facing. Residues 95–115 (AWGWTCTFLGGFVLLVVFLAT) traverse the membrane as a helical segment. The Cytoplasmic portion of the chain corresponds to 116-141 (RRVAVTARHLSRLVVGAAVWRGAGRA). Residues 142-162 (FLLIEDLTGSCFEPLPQGLLL) form a helical membrane-spanning segment. At 163 to 187 (HELPDRKSCLAAGHQWRGYTVSSHT) the chain is on the lumenal side. His186 is a catalytic residue. The chain crosses the membrane as a helical span at residues 188 to 208 (FLLTFCCLLMAEEAAVFAKYL). Over 209–220 (AHGLPAGAPLRL) the chain is Cytoplasmic. A helical transmembrane segment spans residues 221–241 (VFLLNVLLLGLWNFLLLCTVI). At 242–249 (YFHQYTHK) the chain is on the lumenal side. His244 is a catalytic residue. Residues 250 to 270 (VVGAAVGTFAWYLTYGSWYHQ) traverse the membrane as a helical segment. Residues 271-292 (PWSPGIPGHGLFPRSRSMRKHN) lie on the Cytoplasmic side of the membrane.

This sequence belongs to the FIT family. FIT1 subfamily. As to expression, predominantly expressed in skeletal muscle and at lower levels in the heart (at protein level). In the heart, mRNA expression levels do not correlate well with protein levels, suggesting post-transcriptional regulation in this organ.

Its subcellular location is the endoplasmic reticulum membrane. Functionally, plays an important role in the formation of lipid droplets (LDs) which are storage organelles at the center of lipid and energy homeostasis. Directly binds to diacylglycerol (DAGs) and triacylglycerol. The chain is Fat storage-inducing transmembrane protein 1 from Mus musculus (Mouse).